Consider the following 564-residue polypeptide: METKVIAINRRSANITEGKSRAPNRSMYYAMGYEESDFKKPMIGVANGHSTITPCNSGLQKLADAAIDAIEEAGGNAQVFGTPTISDGMAMGTEGMKYSLVSREVISDCIETCVQGQWMDGVLVVGGCDKNMPGGLMGMLRANVPAIFVYGGTILPGHYQGKDLNIVSVFEAVGENAAGRMSDEDLLQIERRAIPGTGSCGGMYTANTMSSAFEALGISLPYSSTMANPHDEKLNSAKESARVLIEAVKKDIKPRDIVTKKSIENAVAVIMATGGSTNAVLHFLAIAHAAGVEWTIDDFERVRQKTPVLCNLKPSGQYLAVDLHQAGGIPQVMKMLLVAGLLHGDCITISGQTIAEVLADVPDAPRAGQDVIRPIDQPMYAQGHLAILKGNLSPEGCVAKITGLKNPVMTGPARVFEDEQSGLKAILDGKIVAGDVMVLRYLGPKGGPGMPEMLAPTGALIGAGLGESVGLITDGRFSGGTWGMVVGHVAPEAAAGGNIAFIEEGDSITIDANQLLLQLNISDAELESRKVGWTAPAPRYTRGVQAKFAFNASSASKGAVLDDY.

Cysteine 55 serves as a coordination point for [2Fe-2S] cluster. Aspartate 87 is a binding site for Mg(2+). Cysteine 128 contacts [2Fe-2S] cluster. Residues aspartate 129 and lysine 130 each contribute to the Mg(2+) site. Lysine 130 is subject to N6-carboxylysine. Cysteine 200 provides a ligand contact to [2Fe-2S] cluster. Residue glutamate 452 participates in Mg(2+) binding. Residue serine 478 is the Proton acceptor of the active site.

The protein belongs to the IlvD/Edd family. In terms of assembly, homodimer. [2Fe-2S] cluster serves as cofactor. The cofactor is Mg(2+).

It catalyses the reaction (2R)-2,3-dihydroxy-3-methylbutanoate = 3-methyl-2-oxobutanoate + H2O. It carries out the reaction (2R,3R)-2,3-dihydroxy-3-methylpentanoate = (S)-3-methyl-2-oxopentanoate + H2O. It participates in amino-acid biosynthesis; L-isoleucine biosynthesis; L-isoleucine from 2-oxobutanoate: step 3/4. Its pathway is amino-acid biosynthesis; L-valine biosynthesis; L-valine from pyruvate: step 3/4. Its function is as follows. Functions in the biosynthesis of branched-chain amino acids. Catalyzes the dehydration of (2R,3R)-2,3-dihydroxy-3-methylpentanoate (2,3-dihydroxy-3-methylvalerate) into 2-oxo-3-methylpentanoate (2-oxo-3-methylvalerate) and of (2R)-2,3-dihydroxy-3-methylbutanoate (2,3-dihydroxyisovalerate) into 2-oxo-3-methylbutanoate (2-oxoisovalerate), the penultimate precursor to L-isoleucine and L-valine, respectively. The chain is Dihydroxy-acid dehydratase from Polaromonas naphthalenivorans (strain CJ2).